Reading from the N-terminus, the 274-residue chain is Penicillin-insensitive murein endopeptidase (274 aa).

An N-terminal signal peptide occupies residues 1–19 (MNKTAIALLALLASSASLA). Cystine bridges form between Cys-44–Cys-265, Cys-187–Cys-235, and Cys-216–Cys-223. His-110, His-113, Asp-120, Asp-147, His-150, and His-211 together coordinate Zn(2+). The segment at 228 to 265 (LPPPGDGCGAELQSWFAPPKPGTTKPEKKTPPPLPPSC) is disordered.

Belongs to the peptidase M74 family. Dimer. Zn(2+) serves as cofactor.

The protein resides in the periplasm. Functionally, murein endopeptidase that cleaves the D-alanyl-meso-2,6-diamino-pimelyl amide bond that connects peptidoglycan strands. Likely plays a role in the removal of murein from the sacculus. The protein is Penicillin-insensitive murein endopeptidase of Shigella boydii serotype 18 (strain CDC 3083-94 / BS512).